We begin with the raw amino-acid sequence, 305 residues long: Tetraacyldisaccharide 4'-kinase (305 aa).

Position 39–46 (39–46) interacts with ATP; that stretch reads SVGGNGKT.

Belongs to the LpxK family.

The enzyme catalyses a lipid A disaccharide + ATP = a lipid IVA + ADP + H(+). It functions in the pathway glycolipid biosynthesis; lipid IV(A) biosynthesis; lipid IV(A) from (3R)-3-hydroxytetradecanoyl-[acyl-carrier-protein] and UDP-N-acetyl-alpha-D-glucosamine: step 6/6. In terms of biological role, transfers the gamma-phosphate of ATP to the 4'-position of a tetraacyldisaccharide 1-phosphate intermediate (termed DS-1-P) to form tetraacyldisaccharide 1,4'-bis-phosphate (lipid IVA). This chain is Tetraacyldisaccharide 4'-kinase, found in Pseudoalteromonas atlantica (strain T6c / ATCC BAA-1087).